A 393-amino-acid polypeptide reads, in one-letter code: Formate-dependent phosphoribosylglycinamide formyltransferase (393 aa).

N(1)-(5-phospho-beta-D-ribosyl)glycinamide contacts are provided by residues 22–23 and glutamate 82; that span reads EL. Residues arginine 114, lysine 155, 160-165, 195-198, and glutamate 203 each bind ATP; these read SSGHGQ and EGFI. Positions 119-308 constitute an ATP-grasp domain; sequence RLAAEELGLP…QFALHARAIL (190 aa). Glutamate 267 and glutamate 279 together coordinate Mg(2+). N(1)-(5-phospho-beta-D-ribosyl)glycinamide is bound by residues aspartate 286, lysine 356, and 363 to 364; that span reads RR.

It belongs to the PurK/PurT family. In terms of assembly, homodimer.

It catalyses the reaction N(1)-(5-phospho-beta-D-ribosyl)glycinamide + formate + ATP = N(2)-formyl-N(1)-(5-phospho-beta-D-ribosyl)glycinamide + ADP + phosphate + H(+). It participates in purine metabolism; IMP biosynthesis via de novo pathway; N(2)-formyl-N(1)-(5-phospho-D-ribosyl)glycinamide from N(1)-(5-phospho-D-ribosyl)glycinamide (formate route): step 1/1. In terms of biological role, involved in the de novo purine biosynthesis. Catalyzes the transfer of formate to 5-phospho-ribosyl-glycinamide (GAR), producing 5-phospho-ribosyl-N-formylglycinamide (FGAR). Formate is provided by PurU via hydrolysis of 10-formyl-tetrahydrofolate. This chain is Formate-dependent phosphoribosylglycinamide formyltransferase, found in Haemophilus ducreyi (strain 35000HP / ATCC 700724).